We begin with the raw amino-acid sequence, 134 residues long: Pro-opiomelanocortin (134 aa).

At Ser1 the chain carries N-acetylserine. Val13 bears the Valine amide mark. Residue Ser31 is modified to Phosphoserine. Basic and acidic residues-rich tracts occupy residues 43–52 and 79–104; these read LARERPEPAR and SAEKKDEGPYKMEHFRWGSPAKDKRY. A disordered region spans residues 43 to 107; it reads LARERPEPAR…PAKDKRYGGF (65 aa).

The protein belongs to the POMC family. Specific enzymatic cleavages at paired basic residues yield the different active peptides. In terms of tissue distribution, ACTH and MSH are produced by the pituitary gland.

The protein resides in the secreted. In terms of biological role, stimulates the adrenal glands to release cortisol. Its function is as follows. Anorexigenic peptide. Increases the pigmentation of skin by increasing melanin production in melanocytes. Increases the pigmentation of skin by increasing melanin production in melanocytes. Functionally, endogenous orexigenic opiate. In terms of biological role, endogenous opiate. The protein is Pro-opiomelanocortin (POMC) of Loxodonta africana (African elephant).